Consider the following 71-residue polypeptide: Plasticin-C2 (71 aa).

Residues 1–22 (MAFLKKSLLLVLFLALVPLSIC) form the signal peptide. The propeptide occupies 23–45 (EEEKREEEDEEKQEDDDQSENKR). The tract at residues 25–46 (EKREEEDEEKQEDDDQSENKRG) is disordered. A compositionally biased stretch (acidic residues) spans 26-40 (KREEEDEEKQEDDDQ). Asparagine amide is present on asparagine 68. A propeptide spanning residues 70-71 (ES) is cleaved from the precursor.

This sequence belongs to the frog skin active peptide (FSAP) family. Plasticin subfamily. In terms of tissue distribution, expressed by the skin glands.

The protein localises to the secreted. The protein resides in the target cell membrane. In terms of biological role, neutral peptide with no antimicrobial activity. May act in synergy with cationic peptides by enhancing their activity. Has a moderate hemolytic activity. The chain is Plasticin-C2 from Agalychnis callidryas (Red-eyed tree frog).